The primary structure comprises 120 residues: Large ribosomal subunit protein uL18 (120 aa).

The protein belongs to the universal ribosomal protein uL18 family. Part of the 50S ribosomal subunit; part of the 5S rRNA/L5/L18/L25 subcomplex. Contacts the 5S and 23S rRNAs.

Its function is as follows. This is one of the proteins that bind and probably mediate the attachment of the 5S RNA into the large ribosomal subunit, where it forms part of the central protuberance. The protein is Large ribosomal subunit protein uL18 of Methylorubrum populi (strain ATCC BAA-705 / NCIMB 13946 / BJ001) (Methylobacterium populi).